Here is a 299-residue protein sequence, read N- to C-terminus: uncharacterized protein (299 aa).

6 helical membrane-spanning segments follow: residues 32 to 52, 56 to 76, 199 to 219, 220 to 240, 246 to 266, and 273 to 293; these read FILLLIIIAAIPLLISYYLHL, SMIIFVVIYVGAALFIPSILY, LAIGFIILCGVIPAVAALLGA, YLIAVSGMLSGVAPIPPVKPE, FEIVQMGTAIIGALFAIPIFG, and FLISAVTMTIGVLAYYTILKF.

It is found in the cell membrane. This is an uncharacterized protein from Methanocaldococcus jannaschii (strain ATCC 43067 / DSM 2661 / JAL-1 / JCM 10045 / NBRC 100440) (Methanococcus jannaschii).